The chain runs to 80 residues: Ubiquinol-cytochrome c reductase complex assembly factor 5 (80 aa).

Residues 1-19 (MFSRAQVRRALQRVPGKQR) lie on the Mitochondrial matrix side of the membrane. Residues 20–41 (FGIYRFLPFFFVLGGAMEWIMI) form a helical membrane-spanning segment. Topologically, residues 42 to 80 (KVRVGQETFYDVYRRKASERQYQRRLEDTSETNLHKLIK) are mitochondrial intermembrane.

It belongs to the UQCC5 family. Associates with the mitochondrial ribosome. Interacts with UQCC6. Interacts with MT-CYB; interacts with newly synthesizes MT-CYB. Forms a complex, named COMB/coordinator of mitochondrial CYTB biogenesis, composed of UQCC1, UQCC2, UQCC4, UQCC5 and UQCC6; stabilizes nascent cytochrome b/MT-CYB and promotes its membrane insertion.

The protein resides in the mitochondrion inner membrane. In terms of biological role, required for the assembly and stability of the mitochondrial ubiquinol-cytochrome c reductase complex (complex III (CIII) or cytochrome b-c1 complex), a multisubunit transmembrane complex that is part of the mitochondrial electron transport chain (ETC) which drives oxidative phosphorylation. Mediates early complex III biogenesis. Participates in regulating the levels of electron transport chain proteins, and therefore energy supply, in response to changes in energy demand. Also required for cytochrome c oxidase complex (complex IV) assembly. The chain is Ubiquinol-cytochrome c reductase complex assembly factor 5 from Mus musculus (Mouse).